The sequence spans 245 residues: DNA repair protein RecO (245 aa).

The protein belongs to the RecO family.

In terms of biological role, involved in DNA repair and RecF pathway recombination. This is DNA repair protein RecO from Klebsiella pneumoniae subsp. pneumoniae (strain ATCC 700721 / MGH 78578).